Here is a 136-residue protein sequence, read N- to C-terminus: Probable endoribonuclease MazF7 (136 aa).

Residues Thr115–Pro136 form a disordered region.

Belongs to the PemK/MazF family. In terms of assembly, forms a complex with cognate antitoxin MazE7.

Functionally, toxic component of a type II toxin-antitoxin (TA) system. Upon expression in E.coli and M.smegmatis inhibits cell growth and colony formation. Its toxic effect is neutralized by coexpression with cognate antitoxin MazE7. Probably an endoribonuclease. This is Probable endoribonuclease MazF7 (mazF7) from Mycobacterium tuberculosis (strain ATCC 25618 / H37Rv).